The sequence spans 721 residues: Translation initiation factor eIF2B subunit epsilon (721 aa).

Residues 1 to 13 (MAAPVVAPPGVVV) are compositionally biased toward low complexity. A disordered region spans residues 1 to 40 (MAAPVVAPPGVVVSRANKRSGAGPGGSGGGGARGAEEEPP). The residue at position 2 (A2) is an N-acetylalanine. Position 19 is an omega-N-methylarginine (R19). Residues 22–33 (AGPGGSGGGGAR) show a composition bias toward gly residues. S27 is modified (phosphoserine). Glycyl lysine isopeptide (Lys-Gly) (interchain with G-Cter in ubiquitin) cross-links involve residues K61 and K103. S130 carries the phosphoserine modification. Residues K141 and K217 each participate in a glycyl lysine isopeptide (Lys-Gly) (interchain with G-Cter in ubiquitin) cross-link. T322 bears the Phosphothreonine mark. Disordered stretches follow at residues 444–483 (PEGSVISLHPPDAEEDEDDGEFSDDSGADQEKDKVKMKGY) and 523–547 (EESESESEQSMDSEEPDSRGGSPQM). S450, S466, S469, S532, and S540 each carry phosphoserine. Composition is skewed to acidic residues over residues 456–471 (AEEDEDDGEFSDDSGA) and 523–537 (EESESESEQSMDSEE). Residues 543–720 (GSPQMDDIKV…KEAEEESSED (178 aa)) enclose the W2 domain. S544 is modified (phosphoserine; by DYRK2). At S717 the chain carries Phosphoserine.

Belongs to the eIF-2B gamma/epsilon subunits family. As to quaternary structure, component of the translation initiation factor 2B (eIF2B) complex which is a heterodecamer of two sets of five different subunits: alpha, beta, gamma, delta and epsilon. Subunits alpha, beta and delta comprise a regulatory subcomplex and subunits epsilon and gamma comprise a catalytic subcomplex. Within the complex, the hexameric regulatory complex resides at the center, with the two heterodimeric catalytic subcomplexes bound on opposite sides. Post-translationally, phosphorylated at Ser-544 by DYRK2; this is required for subsequent phosphorylation by GSK3B. Phosphorylated on serine and threonine residues by GSK3B; phosphorylation inhibits its function. Polyubiquitinated, probably by NEDD4.

The protein resides in the cytoplasm. It localises to the cytosol. With respect to regulation, activated by the chemical integrated stress response (ISR) inhibitor ISRIB which stimulates guanine nucleotide exchange factor activity for both phosphorylated and unphosphorylated eIF2. Its function is as follows. Acts as a component of the translation initiation factor 2B (eIF2B) complex, which catalyzes the exchange of GDP for GTP on eukaryotic initiation factor 2 (eIF2) gamma subunit. Its guanine nucleotide exchange factor activity is repressed when bound to eIF2 complex phosphorylated on the alpha subunit, thereby limiting the amount of methionyl-initiator methionine tRNA available to the ribosome and consequently global translation is repressed. This is Translation initiation factor eIF2B subunit epsilon (EIF2B5) from Homo sapiens (Human).